The following is a 47-amino-acid chain: Putative protein PinH (47 aa).

One can recognise a Resolvase/invertase-type recombinase catalytic domain in the interval 1–47; the sequence is MWHLVVLLEELCERGINFRALAQSIFAQQWGDECCKSKTICDLKVIV.

Belongs to the site-specific recombinase resolvase family.

The chain is Putative protein PinH (pinH) from Escherichia coli (strain K12).